The chain runs to 586 residues: Exocyst complex component EXO70A3 (586 aa).

N65 and N106 each carry an N-linked (GlcNAc...) asparagine glycan. The tract at residues 119–149 is disordered; it reads CLPSNLRPPSDDEGSDGKSHDPQSNGLGKTD. The chain crosses the membrane as a helical span at residues 258 to 278; the sequence is FAEITTISFGMLLSFGYAIAI. N321 and N487 each carry an N-linked (GlcNAc...) asparagine glycan.

This sequence belongs to the EXO70 family. In terms of assembly, subunit of the exocyst complex. Confined to the outer layer of the columella cells in the root tips of young seedlings.

It localises to the membrane. Functionally, component of the exocyst complex involved in the docking of exocytic vesicles with fusion sites on the plasma membrane during regulated or polarized secretion. Involved in PIN4 exocytosis and gravitropic responses in columella cells. By monitoring PIN4 distribution in columella cells, modulates auxin repartition and subsequently regulates the root system architecture (RSA), thus being a component of the auxin-dependent root directional growth (ARD). The protein is Exocyst complex component EXO70A3 of Arabidopsis thaliana (Mouse-ear cress).